The chain runs to 93 residues: Pyrimidine/purine nucleoside phosphorylase (93 aa).

The protein belongs to the nucleoside phosphorylase PpnP family.

It catalyses the reaction a purine D-ribonucleoside + phosphate = a purine nucleobase + alpha-D-ribose 1-phosphate. It carries out the reaction adenosine + phosphate = alpha-D-ribose 1-phosphate + adenine. The catalysed reaction is cytidine + phosphate = cytosine + alpha-D-ribose 1-phosphate. The enzyme catalyses guanosine + phosphate = alpha-D-ribose 1-phosphate + guanine. It catalyses the reaction inosine + phosphate = alpha-D-ribose 1-phosphate + hypoxanthine. It carries out the reaction thymidine + phosphate = 2-deoxy-alpha-D-ribose 1-phosphate + thymine. The catalysed reaction is uridine + phosphate = alpha-D-ribose 1-phosphate + uracil. The enzyme catalyses xanthosine + phosphate = alpha-D-ribose 1-phosphate + xanthine. Functionally, catalyzes the phosphorolysis of diverse nucleosides, yielding D-ribose 1-phosphate and the respective free bases. Can use uridine, adenosine, guanosine, cytidine, thymidine, inosine and xanthosine as substrates. Also catalyzes the reverse reactions. The sequence is that of Pyrimidine/purine nucleoside phosphorylase from Sorangium cellulosum (strain So ce56) (Polyangium cellulosum (strain So ce56)).